We begin with the raw amino-acid sequence, 340 residues long: tRNA N6-adenosine threonylcarbamoyltransferase (340 aa).

Fe cation-binding residues include His111 and His115. Substrate-binding positions include Ile134–Ala138, Asp167, Gly180, and Asn273. Position 301 (Asp301) interacts with Fe cation.

It belongs to the KAE1 / TsaD family. It depends on Fe(2+) as a cofactor.

The protein localises to the cytoplasm. It catalyses the reaction L-threonylcarbamoyladenylate + adenosine(37) in tRNA = N(6)-L-threonylcarbamoyladenosine(37) in tRNA + AMP + H(+). Required for the formation of a threonylcarbamoyl group on adenosine at position 37 (t(6)A37) in tRNAs that read codons beginning with adenine. Is involved in the transfer of the threonylcarbamoyl moiety of threonylcarbamoyl-AMP (TC-AMP) to the N6 group of A37, together with TsaE and TsaB. TsaD likely plays a direct catalytic role in this reaction. The chain is tRNA N6-adenosine threonylcarbamoyltransferase from Wigglesworthia glossinidia brevipalpis.